A 148-amino-acid chain; its full sequence is Lysozyme-like protein 6 (148 aa).

The N-terminal stretch at 1–19 (MLKALFICVASCLLVVNDG) is a signal peptide. Residues 20 to 148 (NIIHRCSLAK…SYWMTGCHLG (129 aa)) form the C-type lysozyme domain. 4 disulfide bridges follow: Cys25–Cys145, Cys49–Cys133, Cys83–Cys98, and Cys94–Cys112. The active site involves Glu54. Residue Asn58 is glycosylated (N-linked (GlcNAc...) asparagine). The active site involves Asp71.

It belongs to the glycosyl hydrolase 22 family. In terms of assembly, monomer. As to expression, expressed strongly in testis and epididymis and weakly in seminal vesicle, vas deferens, kidney and spleen. Highly expressed in primary spermatocytes and round spermatids (at protein level).

The protein localises to the secreted. It is found in the cell surface. The protein resides in the cell projection. It localises to the cilium. Its subcellular location is the flagellum. The enzyme catalyses Hydrolysis of (1-&gt;4)-beta-linkages between N-acetylmuramic acid and N-acetyl-D-glucosamine residues in a peptidoglycan and between N-acetyl-D-glucosamine residues in chitodextrins.. Functionally, may be involved sperm-egg plasma membrane adhesion and fusion during fertilization. Exhibits bacteriolytic activity in vitro against Micrococcus luteus and Staphylococcus aureus. Shows weak bacteriolytic activity against Gram-positive bacteria at physiological pH. Bacteriolytic activity is pH-dependent, with a maximum at around pH 5.6. This chain is Lysozyme-like protein 6 (Lyzl6), found in Mus musculus (Mouse).